An 88-amino-acid chain; its full sequence is Exodeoxyribonuclease 7 small subunit (88 aa).

It belongs to the XseB family. As to quaternary structure, heterooligomer composed of large and small subunits.

The protein resides in the cytoplasm. The enzyme catalyses Exonucleolytic cleavage in either 5'- to 3'- or 3'- to 5'-direction to yield nucleoside 5'-phosphates.. Its function is as follows. Bidirectionally degrades single-stranded DNA into large acid-insoluble oligonucleotides, which are then degraded further into small acid-soluble oligonucleotides. This Tolumonas auensis (strain DSM 9187 / NBRC 110442 / TA 4) protein is Exodeoxyribonuclease 7 small subunit.